The following is a 154-amino-acid chain: MAQGEQGALAQFGEWLWSNPIEPDQNDELVDAQEEEGQILYLDQQAGLRYSYSQSTTLRPTPQGQSSSVPTFRNAQRFQVEYSSPTTFTRSQTSRLSLSHTRPPLQSAQCLLNSTLGAHNQPWVATLTHSPSQNQQPKPSPPNRLTGRNSGRVR.

Disordered regions lie at residues 83–103 (SSPT…HTRP) and 123–154 (WVAT…GRVR).

The protein belongs to the luteoviruses movement protein family.

Transports viral genome to neighboring plant cells directly through plasmosdesmata, without any budding. The movement protein allows efficient cell to cell propagation, by bypassing the host cell wall barrier. This Barley yellow dwarf virus (isolate MAV) (BYDV) protein is Movement protein.